The primary structure comprises 169 residues: Myosin regulatory light chain 11 (169 aa).

N,N,N-trimethylalanine is present on Ala2. Residues Ser15 and Ser16 each carry the phosphoserine modification. Thr25 and Thr35 each carry phosphothreonine. Residues 25–60 enclose the EF-hand 1 domain; the sequence is TQIQEFKEAFTVIDQNRDGIIDKEDLRDTFAAMGRL. Ca(2+)-binding residues include Asp38, Asn40, Asp42, and Asp49. Ser75 is subject to Phosphoserine. 2 consecutive EF-hand domains span residues 95 to 130 and 131 to 166; these read DPED…QCDR and FSQE…GDAK. Thr101 is subject to Phosphothreonine.

As to quaternary structure, myosin is a hexamer of 2 heavy chains and 4 light chains.

Its function is as follows. Myosin regulatory subunit that plays an essential role to maintain muscle integrity during early development. Plays a role in regulation of muscle contraction. This is Myosin regulatory light chain 11 (Myl11) from Mus musculus (Mouse).